We begin with the raw amino-acid sequence, 513 residues long: Chromosomal replication initiator protein DnaA (513 aa).

The domain I, interacts with DnaA modulators stretch occupies residues Met-1 to Arg-87. The tract at residues Arg-87–Ser-176 is domain II. Residues Ala-113–Gln-163 are disordered. Low complexity predominate over residues Ser-123 to Ala-135. Positions Tyr-177 to Ser-393 are domain III, AAA+ region. Positions 221, 223, 224, and 225 each coordinate ATP. Positions His-394–Thr-513 are domain IV, binds dsDNA.

Belongs to the DnaA family. As to quaternary structure, oligomerizes as a right-handed, spiral filament on DNA at oriC.

It localises to the cytoplasm. Plays an essential role in the initiation and regulation of chromosomal replication. ATP-DnaA binds to the origin of replication (oriC) to initiate formation of the DNA replication initiation complex once per cell cycle. Binds the DnaA box (a 9 base pair repeat at the origin) and separates the double-stranded (ds)DNA. Forms a right-handed helical filament on oriC DNA; dsDNA binds to the exterior of the filament while single-stranded (ss)DNA is stabiized in the filament's interior. The ATP-DnaA-oriC complex binds and stabilizes one strand of the AT-rich DNA unwinding element (DUE), permitting loading of DNA polymerase. After initiation quickly degrades to an ADP-DnaA complex that is not apt for DNA replication. Binds acidic phospholipids. The protein is Chromosomal replication initiator protein DnaA of Pseudomonas fluorescens (strain ATCC BAA-477 / NRRL B-23932 / Pf-5).